Consider the following 215-residue polypeptide: Cytochrome b6 (215 aa).

Residues 32–52 form a helical membrane-spanning segment; it reads IFYCLGGITFTSFLVQVATGF. A heme c-binding site is contributed by C35. H86 and H100 together coordinate heme b. A run of 3 helical transmembrane segments spans residues 90–110, 116–136, and 186–206; these read ASMM…TGGF, LTWV…VTGY, and LHTF…FLMI. Residues H187 and H202 each coordinate heme b.

This sequence belongs to the cytochrome b family. PetB subfamily. The 4 large subunits of the cytochrome b6-f complex are cytochrome b6, subunit IV (17 kDa polypeptide, PetD), cytochrome f and the Rieske protein, while the 4 small subunits are PetG, PetL, PetM and PetN. The complex functions as a dimer. Requires heme b as cofactor. The cofactor is heme c.

It is found in the plastid. The protein resides in the chloroplast thylakoid membrane. Functionally, component of the cytochrome b6-f complex, which mediates electron transfer between photosystem II (PSII) and photosystem I (PSI), cyclic electron flow around PSI, and state transitions. This is Cytochrome b6 from Oltmannsiellopsis viridis (Marine flagellate).